A 336-amino-acid polypeptide reads, in one-letter code: UPF0324 membrane protein PM1461 (336 aa).

The next 10 membrane-spanning stretches (helical) occupy residues 5-23, 30-52, 62-84, 91-113, 123-140, 153-175, 221-238, 250-271, 275-297, and 310-332; these read TLFLGLVFIGILTFLVNLL, LNANLSALTIAILLGILFGNTFY, GVIFAKGTLLRLGIILYGFRLTL, GINAIATDTIMLISTFLLTLWLG, IVYLTAGGCSICGAAAIM, VSIAVAVIVIFGTISMFLYPLMY, MIRVMMLAPFLLLVSWLL, ISIPWFAFLFILMAVINSFSLI, IVAWIVEIDSLLLIAAMTALGLT, and PLILGALVLCWLVIGGFFVNVGI.

Belongs to the UPF0324 family.

It localises to the cell membrane. The protein is UPF0324 membrane protein PM1461 of Pasteurella multocida (strain Pm70).